Consider the following 280-residue polypeptide: Phosphonates import ATP-binding protein PhnC (280 aa).

Positions phenylalanine 2–lysine 245 constitute an ABC transporter domain. ATP is bound at residue glycine 34–serine 41. The disordered stretch occupies residues threonine 257–histidine 280. Residues glutamate 260–serine 269 are compositionally biased toward basic and acidic residues.

Belongs to the ABC transporter superfamily. Phosphonates importer (TC 3.A.1.9.1) family. As to quaternary structure, the complex is composed of two ATP-binding proteins (PhnC), two transmembrane proteins (PhnE) and a solute-binding protein (PhnD).

Its subcellular location is the cell inner membrane. The enzyme catalyses phosphonate(out) + ATP + H2O = phosphonate(in) + ADP + phosphate + H(+). In terms of biological role, part of the ABC transporter complex PhnCDE involved in phosphonates import. Responsible for energy coupling to the transport system. In Rhizobium johnstonii (strain DSM 114642 / LMG 32736 / 3841) (Rhizobium leguminosarum bv. viciae), this protein is Phosphonates import ATP-binding protein PhnC.